Reading from the N-terminus, the 127-residue chain is Mini-ribonuclease 3-like protein (127 aa).

The active site involves aspartate 19.

Belongs to the MrnC RNase family.

Might be a ribonuclease involved in RNA processing. The chain is Mini-ribonuclease 3-like protein (mrnCL) from Ilyobacter polytropus (strain ATCC 51220 / DSM 2926 / LMG 16218 / CuHBu1).